Here is a 30-residue protein sequence, read N- to C-terminus: Uperin-6.2 (30 aa).

Expressed by the skin dorsal glands.

Its subcellular location is the secreted. The polypeptide is Uperin-6.2 (Uperoleia inundata (Floodplain toadlet)).